The sequence spans 407 residues: Accessory Sec system protein translocase subunit SecY2 (407 aa).

10 consecutive transmembrane segments (helical) span residues 22-42 (IAFTILILLIYILGSKITIVD), 68-88 (LNVFSLGLGPWLTAMIIISLI), 108-128 (EKFLTLGLSIIQGYFVINQFV), 136-156 (FTELLLLLILVTGAMLMMWLA), 169-189 (PIVLLSVIKSMFTQSLPIVSI), 191-211 (ILMLVVMVILIIVALFILLLT), 245-265 (ISIMISLSVFLLLTSTINLIF), 280-300 (FGHYMGVTIYLILQTVLGYLL), 343-363 (WFGTTIVTAIIGVPLYISLLV), and 366-386 (LSEYIYFAVQLMIMVYLAMNI).

The protein belongs to the SecY/SEC61-alpha family. SecY2 subfamily. Component of the accessory SecA2/SecY2 protein translocase complex required to export cell wall proteins. May form heterotrimers with SecE and SecG subunits.

It is found in the cell membrane. Its function is as follows. Part of the accessory SecA2/SecY2 system specifically required for export of possible cell wall proteins. The central subunit of a protein translocation channel. The chain is Accessory Sec system protein translocase subunit SecY2 from Staphylococcus pseudintermedius (strain ED99).